The primary structure comprises 682 residues: Serine/threonine-protein kinase PLK2 (682 aa).

Positions 25 to 67 (ACGGDSKKKRPQQPSEDGQPQAQVTPAAPHHHHHHSHSGPEIS) are disordered. The span at 36-48 (QQPSEDGQPQAQV) shows a compositional bias: polar residues. One can recognise a Protein kinase domain in the interval 79 to 331 (YCRGKVLGKG…LDDIIRHDFF (253 aa)). ATP contacts are provided by residues 85–93 (LGKGGFAKC) and lysine 108. The Proton acceptor role is filled by aspartate 202. Threonine 236 carries the phosphothreonine modification. The segment at 403–432 (SITQQPSKHRADEEPQPPPTTVARSGTSAV) is disordered. POLO box domains follow at residues 500–578 (WVTK…YMEE) and 598–682 (YLLQ…QRCN).

Belongs to the protein kinase superfamily. Ser/Thr protein kinase family. CDC5/Polo subfamily. As to quaternary structure, interacts with NSF; causing NSF dissociation from GRIA2. Interacts with CIB1. Catalytic activity is enhanced by phosphorylation of Thr-236. In terms of tissue distribution, brain, lung and heart.

It is found in the cytoplasm. It localises to the cytoskeleton. Its subcellular location is the microtubule organizing center. The protein localises to the centrosome. The protein resides in the centriole. It is found in the cell projection. It localises to the dendrite. It catalyses the reaction L-seryl-[protein] + ATP = O-phospho-L-seryl-[protein] + ADP + H(+). It carries out the reaction L-threonyl-[protein] + ATP = O-phospho-L-threonyl-[protein] + ADP + H(+). With respect to regulation, activated by phosphorylation of Thr-236. Once activated, activity is stimulated by binding target proteins. Functionally, tumor suppressor serine/threonine-protein kinase involved in synaptic plasticity, centriole duplication and G1/S phase transition. Polo-like kinases act by binding and phosphorylating proteins that are already phosphorylated on a specific motif recognized by the POLO box domains. Phosphorylates CPAP, NPM1, RAPGEF2, RASGRF1, SNCA, SIPA1L1 and SYNGAP1. Plays a key role in synaptic plasticity and memory by regulating the Ras and Rap protein signaling: required for overactivity-dependent spine remodeling by phosphorylating the Ras activator RASGRF1 and the Rap inhibitor SIPA1L1 leading to their degradation by the proteasome. Conversely, phosphorylates the Rap activator RAPGEF2 and the Ras inhibitor SYNGAP1, promoting their activity. Also regulates synaptic plasticity independently of kinase activity, via its interaction with NSF that disrupts the interaction between NSF and the GRIA2 subunit of AMPARs, leading to a rapid rundown of AMPAR-mediated current that occludes long term depression. Required for procentriole formation and centriole duplication by phosphorylating CPAP and NPM1, respectively. Its induction by p53/TP53 suggests that it may participate in the mitotic checkpoint following stress. The chain is Serine/threonine-protein kinase PLK2 (Plk2) from Mus musculus (Mouse).